Reading from the N-terminus, the 661-residue chain is Zeaxanthin epoxidase, chloroplastic (661 aa).

Residues 1 to 50 (MASTLFYNSMNLSAAVFSRTHFPIPINKDFPLEFSPCIHTDYHLRSRTRS) constitute a chloroplast transit peptide. FAD is bound by residues 82–110 (RILVAGGGIGGLVFALAAKKKGFDVVVFE) and 360–373 (ILTWGKGHVTLLGD). The 50-residue stretch at 558-607 (CIIGSAPHGDVSGISIAIPKPQVSEMHARISYKDGAFYLTDLRSEHGTWI) folds into the FHA domain.

FAD serves as cofactor.

It localises to the plastid. The protein localises to the chloroplast. The catalysed reaction is all-trans-zeaxanthin + 4 reduced [2Fe-2S]-[ferredoxin] + 2 O2 + 4 H(+) = all-trans-violaxanthin + 4 oxidized [2Fe-2S]-[ferredoxin] + 2 H2O. The protein operates within plant hormone biosynthesis; abscisate biosynthesis. In terms of biological role, converts zeaxanthin into antheraxanthin and subsequently violaxanthin. Involved in the epoxidation of zeaxanthin. The chain is Zeaxanthin epoxidase, chloroplastic from Prunus armeniaca (Apricot).